The sequence spans 192 residues: Adenylate kinase (192 aa).

10–18 is a binding site for ATP; that stretch reads GVPGVGSTT.

Belongs to the archaeal adenylate kinase family. In terms of assembly, monomer.

It is found in the cytoplasm. The enzyme catalyses AMP + ATP = 2 ADP. This chain is Adenylate kinase (adkA), found in Methanococcus voltae.